The chain runs to 266 residues: Translation initiation factor 2 subunit alpha (266 aa).

Residues 10–81 enclose the S1 motif domain; the sequence is GELVVGKIDE…SAQQIDLSIK (72 aa). Residues 233 to 266 are disordered; the sequence is AEDALEESADRAAKVVEQHGGSGQFHRERSEDDE. Composition is skewed to basic and acidic residues over residues 240 to 249 and 257 to 266; these read SADRAAKVVE and FHRERSEDDE.

The protein belongs to the eIF-2-alpha family. Heterotrimer composed of an alpha, a beta and a gamma chain.

Its function is as follows. eIF-2 functions in the early steps of protein synthesis by forming a ternary complex with GTP and initiator tRNA. This Haloarcula marismortui (strain ATCC 43049 / DSM 3752 / JCM 8966 / VKM B-1809) (Halobacterium marismortui) protein is Translation initiation factor 2 subunit alpha.